We begin with the raw amino-acid sequence, 508 residues long: GMP synthase [glutamine-hydrolyzing] (508 aa).

Residues 1–189 (MILVLDFGSQ…ALLVCGCEKT (189 aa)) form the Glutamine amidotransferase type-1 domain. Residue Cys-78 is the Nucleophile of the active site. Catalysis depends on residues His-163 and Glu-165. Residues 190 to 383 (WGMQHFAQKE…LGISQDFLMR (194 aa)) enclose the GMPS ATP-PPase domain. ATP is bound at residue 217–223 (SGGVDST).

In terms of assembly, homodimer.

The catalysed reaction is XMP + L-glutamine + ATP + H2O = GMP + L-glutamate + AMP + diphosphate + 2 H(+). It functions in the pathway purine metabolism; GMP biosynthesis; GMP from XMP (L-Gln route): step 1/1. Catalyzes the synthesis of GMP from XMP. This chain is GMP synthase [glutamine-hydrolyzing], found in Helicobacter pylori (strain Shi470).